A 333-amino-acid chain; its full sequence is tRNA N6-adenosine threonylcarbamoyltransferase (333 aa).

Residues His-111 and His-115 each coordinate Fe cation. Residues 134-138, Asp-167, Gly-180, and Asn-272 contribute to the substrate site; that span reads LVSGG. Asp-300 contributes to the Fe cation binding site.

The protein belongs to the KAE1 / TsaD family. Fe(2+) serves as cofactor.

Its subcellular location is the cytoplasm. The catalysed reaction is L-threonylcarbamoyladenylate + adenosine(37) in tRNA = N(6)-L-threonylcarbamoyladenosine(37) in tRNA + AMP + H(+). Functionally, required for the formation of a threonylcarbamoyl group on adenosine at position 37 (t(6)A37) in tRNAs that read codons beginning with adenine. Is involved in the transfer of the threonylcarbamoyl moiety of threonylcarbamoyl-AMP (TC-AMP) to the N6 group of A37, together with TsaE and TsaB. TsaD likely plays a direct catalytic role in this reaction. This chain is tRNA N6-adenosine threonylcarbamoyltransferase, found in Legionella pneumophila (strain Paris).